The primary structure comprises 284 residues: Cysteine-rich repeat secretory protein 8 (284 aa).

The signal sequence occupies residues 1–27; sequence MATFIRFTAPLFCFFFLFSLFSHQTMS. 2 Gnk2-homologous domains span residues 32–136 and 151–259; these read MATF…NVSF and SLAT…TTGL.

It belongs to the cysteine-rich repeat secretory protein family.

Its subcellular location is the secreted. The polypeptide is Cysteine-rich repeat secretory protein 8 (CRRSP8) (Arabidopsis thaliana (Mouse-ear cress)).